The primary structure comprises 842 residues: Elongation factor 2 (842 aa).

Residues 17–346 (TNVRNMSVIA…MIVLHLPSPV (330 aa)) form the tr-type G domain. GTP-binding positions include 26 to 33 (AHVDHGKS), 158 to 161 (NKVD), and 213 to 215 (SGL). Diphthamide is present on His699.

This sequence belongs to the TRAFAC class translation factor GTPase superfamily. Classic translation factor GTPase family. EF-G/EF-2 subfamily.

The protein localises to the cytoplasm. It catalyses the reaction GTP + H2O = GDP + phosphate + H(+). Its function is as follows. Catalyzes the GTP-dependent ribosomal translocation step during translation elongation. During this step, the ribosome changes from the pre-translocational (PRE) to the post-translocational (POST) state as the newly formed A-site-bound peptidyl-tRNA and P-site-bound deacylated tRNA move to the P and E sites, respectively. Catalyzes the coordinated movement of the two tRNA molecules, the mRNA and conformational changes in the ribosome. In Candida albicans (strain SC5314 / ATCC MYA-2876) (Yeast), this protein is Elongation factor 2 (EFT2).